A 640-amino-acid polypeptide reads, in one-letter code: Protein argonaute (640 aa).

Residues Met-1–Asn-100 are N-terminal domain. The interval Phe-101–Ser-153 is linker L1. A PAZ domain region spans residues Asp-154–Thr-209. Residues Ser-210–Lys-291 form a linker L2 region. The interval Ile-292–Pro-423 is mid domain. A PIWI domain region spans residues Glu-424–Lys-640. Active-site residues include Asp-445, Glu-481, Asp-515, and Asn-623. Asp-445 provides a ligand contact to Mn(2+). Residues Asp-515 and Asn-623 each contribute to the Mn(2+) site.

Belongs to the argonaute family. Long pAgo subfamily. Requires Mn(2+) as cofactor.

In terms of biological role, a highly versatile argonaute that uses 5'-phospho- and 5'-OH- guide RNA (gRNA) or DNA (gDNA) to cleave target RNA or ssDNA (tDNA) in all possible combinations; has no detectable activity in the absence of guide. Uses short guide sequences (18-21 nucleotides (nt) on average) to bind complementary target nucleic acids resulting in target cleavage in a site-specific manner. Using 5'-phospho-gRNA or 5'-OH-gRNA the cleavage site is 10 nt downstream of the target residue base-paired with the 5'-end of the gRNA, using 5'-phospho-gDNA the cleavage site is 11 nucleotides (nt) downstream, while with 5'-OH-gDNA the cleavage site is 9 nt downstream. This is Protein argonaute from Marinitoga hydrogenitolerans (strain DSM 16785 / JCM 12826 / AT1271).